The sequence spans 322 residues: UV DNA damage endonuclease (322 aa).

It belongs to the uve1/UvsE family.

Component in a DNA repair pathway. Removal of UV LIGHT damaged nucleotides. Recognizes pyrimidine dimers and cleave a phosphodiester bond immediately 5' to the lesion. This is UV DNA damage endonuclease from Halalkalibacterium halodurans (strain ATCC BAA-125 / DSM 18197 / FERM 7344 / JCM 9153 / C-125) (Bacillus halodurans).